The following is a 266-amino-acid chain: Small ribosomal subunit protein uS3 (266 aa).

The KH type-2 domain occupies Val39 to Arg107. Residues Glu218–Glu266 form a disordered region. 2 stretches are compositionally biased toward basic and acidic residues: residues Arg230–Glu241 and Gly257–Glu266.

Belongs to the universal ribosomal protein uS3 family. As to quaternary structure, part of the 30S ribosomal subunit. Forms a tight complex with proteins S10 and S14.

Binds the lower part of the 30S subunit head. Binds mRNA in the 70S ribosome, positioning it for translation. This Burkholderia ambifaria (strain MC40-6) protein is Small ribosomal subunit protein uS3.